Consider the following 325-residue polypeptide: Zinc-type alcohol dehydrogenase-like protein C337.11 (325 aa).

Belongs to the zinc-containing alcohol dehydrogenase family. Quinone oxidoreductase subfamily.

The protein resides in the cytoplasm. It is found in the nucleus. This chain is Zinc-type alcohol dehydrogenase-like protein C337.11, found in Schizosaccharomyces pombe (strain 972 / ATCC 24843) (Fission yeast).